Consider the following 556-residue polypeptide: Guanosine-diphosphatase (556 aa).

Over 1–12 (MTPTMKSIARRK) the chain is Cytoplasmic. The chain crosses the membrane as a helical; Signal-anchor for type II membrane protein span at residues 13–33 (ALLIALSIFAVTFILWNGFPG). Residues 34 to 556 (SSNRPLPSSN…GWNCNVKEEI (523 aa)) lie on the Lumenal side of the membrane. The Proton acceptor role is filled by Glu-256. Asn-372 carries N-linked (GlcNAc...) asparagine glycosylation.

It belongs to the GDA1/CD39 NTPase family. It depends on Ca(2+) as a cofactor. Mn(2+) serves as cofactor.

Its subcellular location is the golgi apparatus membrane. It carries out the reaction GDP + H2O = GMP + phosphate + H(+). It participates in protein modification; protein glycosylation. Functionally, after transfer of sugars to endogenous macromolecular acceptors, the enzyme converts nucleoside diphosphates to nucleoside monophosphates which in turn exit the Golgi lumen in a coupled antiporter reaction, allowing entry of additional nucleotide sugar from the cytosol. In Schizosaccharomyces pombe (strain 972 / ATCC 24843) (Fission yeast), this protein is Guanosine-diphosphatase (gdp1).